The primary structure comprises 101 residues: Small ribosomal subunit protein uS14 (101 aa).

It belongs to the universal ribosomal protein uS14 family. In terms of assembly, part of the 30S ribosomal subunit. Contacts proteins S3 and S10.

In terms of biological role, binds 16S rRNA, required for the assembly of 30S particles and may also be responsible for determining the conformation of the 16S rRNA at the A site. This Orientia tsutsugamushi (strain Ikeda) (Rickettsia tsutsugamushi) protein is Small ribosomal subunit protein uS14.